A 308-amino-acid polypeptide reads, in one-letter code: Nuclear transcription factor Y subunit A-5 (308 aa).

The span at 1 to 10 (MQVFQRKEDS) shows a compositional bias: basic and acidic residues. 2 disordered regions span residues 1–26 (MQVFQRKEDSSWGNSMPTTNSNIQGS) and 49–71 (GLQLQNQDSTSSQSTEEESGGGE). Positions 11-26 (SWGNSMPTTNSNIQGS) are enriched in polar residues. The short motif at 181–204 (FVNAKQYHAILRRRKHRAKLEAQN) is the Subunit association domain (SAD) element. A DNA-binding region (NFYA/HAP2-type) is located at residues 211–236 (KPYLHESRHLHALKRARGSGGRFLNT). The tract at residues 251-273 (MANGQNFSMSPHGGGSGIGSSSI) is disordered.

The protein belongs to the NFYA/HAP2 subunit family. Heterotrimeric transcription factor composed of three components, NF-YA, NF-YB and NF-YC. NF-YB and NF-YC must interact and dimerize for NF-YA association and DNA binding. As to expression, expressed in the whole plant, except roots. Present in etiolated seedlings.

Its subcellular location is the nucleus. In terms of biological role, stimulates the transcription of various genes by recognizing and binding to a CCAAT motif in promoters. Involved in the blue light (BL) and abscisic acid (ABA) signaling pathways. The sequence is that of Nuclear transcription factor Y subunit A-5 (NFYA5) from Arabidopsis thaliana (Mouse-ear cress).